The following is a 311-amino-acid chain: Heme A synthase (311 aa).

Topologically, residues 1–6 are cytoplasmic; the sequence is MQRFIK. A helical transmembrane segment spans residues 7 to 27; it reads WLAVITSLDLLIVLLGGALVT. Over 28–62 the chain is Extracellular; it reads KTGSGQGCGKSWPLCNGEFVPSNLSMETIIELSHR. A disulfide bond links C35 and C42. E58 is an active-site residue. Residue H61 participates in heme o binding. The helical transmembrane segment at 63-83 threads the bilayer; the sequence is LTSGSAGILVTLLCILSWKYY. Over 84–91 the chain is Cytoplasmic; it reads KHVRETKT. The helical transmembrane segment at 92 to 112 threads the bilayer; that stretch reads LAILSFVFLVAQALMGAAAVV. The Extracellular segment spans residues 113–121; it reads WGQMPAVLA. A helical membrane pass occupies residues 122-142; sequence IHFGISLISFASVILLTCLIF. H123 contributes to the heme o binding site. Topologically, residues 143–159 are cytoplasmic; the sequence is EIDQKFDARSLIMDKKM. Residues 160–180 form a helical membrane-spanning segment; that stretch reads KFHIYGVTIYCYLVVYTGALV. Residues 181–211 are Extracellular-facing; it reads RHERASLACPDFPLCSKNRPMPTQLHEWVQM. A disulfide bridge connects residues C189 and C195. A helical transmembrane segment spans residues 212 to 232; the sequence is GHRLAAMLIFVWILYAMILAI. H213 is a binding site for heme b. The Cytoplasmic portion of the chain corresponds to 233–243; the sequence is RHYKQQPVVYW. Residues 244–264 form a helical membrane-spanning segment; that stretch reads GWIISFILVTLQAIVGILVVF. The Extracellular portion of the chain corresponds to 265-271; the sequence is TNASLAM. A helical transmembrane segment spans residues 272-292; that stretch reads ALLHSLFISCLFAVLCYLVML. Residue H275 coordinates heme b. The Cytoplasmic segment spans residues 293–311; sequence GTRSKVNAKEAASTSKQTK.

It belongs to the COX15/CtaA family. Type 1 subfamily. As to quaternary structure, interacts with CtaB. Heme b is required as a cofactor.

The protein resides in the cell membrane. The enzyme catalyses Fe(II)-heme o + 2 A + H2O = Fe(II)-heme a + 2 AH2. The protein operates within porphyrin-containing compound metabolism; heme A biosynthesis; heme A from heme O: step 1/1. Catalyzes the conversion of heme O to heme A by two successive hydroxylations of the methyl group at C8. The first hydroxylation forms heme I, the second hydroxylation results in an unstable dihydroxymethyl group, which spontaneously dehydrates, resulting in the formyl group of heme A. In Bacillus cereus (strain 03BB102), this protein is Heme A synthase.